Here is a 1553-residue protein sequence, read N- to C-terminus: MAPTPLPLEQMPGVGGGGGGYLPAAQEGGPRINTMSMSVLIDFIIQRTYHELTVLAELLPRKTDMERKVEIYNYAARTRHLFTRLNALVKWGNSVSKVDKSSQIMSFLDKQNMLFVETADMLARMSRETLVRARLPNFHIPAAVEVLTTGTYNRLPTCIRERIVPADAITPAEKRQTLLRLNQVIQHRLVTGKLLPQMREFRIRNGRVTFEVKHEFSVSLTVMGDNPTVPWRLLDIDVLVEDKETGDGKSLVHPLQVNYIHQLIQARLVENPNALSEVYNCLHYFCQSLQLEVLYTQTLRLNYERLDDNNITVEEYVPGVKLTVSYWRDLKSELGYRLTVQSDPSEIGRPLAVVHVPSLGAKESAEVADRAVRSEHLSMERLIVHTVYIRSVSRLSDLKLEFQAFLKDVDFNLQGTPAILTVPVLSPCLRAEQIHITIDTHTGMFRCHVPKHLDCPIMEEMQDCLNGDRSKLPALLSELRFWITHRRCDKTLQHLPATATETLPFLVQPDQEILQPGRHKIYVKLHRHPNIVLVVQLKEKTTMPNEMEYTFHLGFVAYQKDELDVIDDSAMQLVSIVAQPHSDIPKCYTKLMRLIEFDTFVATHGPGTEVDAEVSPHKRKSNGDLLAPPAKQQKTIFPAYFIPELAHVVAMCDEKIPFMNLAQTLSKHNIPHSGLQVEANATSLVLKILALPQPGKTTFATQQQQQQGAPAVAGENKPSGTSGLPKIDSHVWDDLMRRVLSISIRSQTNKNSQVRIWVVEFVFYSTPLQSSHPKEQGSRRTVYLTYEQANYDFSKTVEDLLNDWSKIVYLYTLVYDFAEQLLNKRLSLCDMLVVKSYSYMNLLLGYGPKKEVSCNIYWSVQSHGFRLTFVGGMSAVNGHSMMRDQLAQHLNQQHSITQIAQILHETYNPLSSIAKLPVLPFLGIPRPQVPVLSFCVLAQSPCLIRLTYQAVYCLELRFRANRLVSIRDGASSRFERNVVEEFTPIQGLKAFLSKYVDESAVYRGRASHEDDNPLSPMGMEDNFGGPSSVAGVSAGGSSPFLGTGMRGPQSPRDSGLRFPAPHTPPSSSNPHTPASPHPSAGAGGGSGPQGHGNFNLTSPPAPHMPHPSPSGLMPSSPLNPQPSPHMVHSPGPNTLYMQSHQDSPFTAMSPANNNWPGSPSMPRPSPRPGQSPDHKSTGGGAGVAGGTDRGGSRGTLNRPWAGAVPTLLTHEALETLCRPSPYPNKDINVPDMSPLERFLGCVYMRRQLHRNIQSEETLTALNSTEPGVVLFKVDGLQCQVVLNQMHMQTLHLKVSQLPPMPDKHPPPFQLSQDDLLVIEQYFDTRVAAPPYRPNSLHSICRLLNLPAQVLKDFVQIMRLDLKPELGGDQLKWTVQICLRMPPSAVPIVPSGNACVVMGRMKILFFLQITRIPYGAVIGVGKDWKDSPSLVLPIVYDIQTNVTQLAERTGQVISPTMTAASTLLRRFAEFNAQQNQCTLFPAITDLLTNLQLAAEMPQPPPNQSIGPPVGVGVGVGSSPNPMMPMQQLPQQVGPQGPVGPGGYPQMGPNPGGPQ.

Short sequence motifs (LXXLL motif) lie at residues 55 to 59 (LAELL) and 472 to 476 (LPALL). A Phosphoserine modification is found at serine 615. Disordered stretches follow at residues 699 to 723 (FATQ…GTSG), 1006 to 1199 (ASHE…LNRP), and 1513 to 1553 (GVGS…GGPQ). The residue at position 1015 (serine 1015) is a Phosphoserine. Low complexity-rich tracts occupy residues 1024–1039 (GGPS…GSSP) and 1065–1080 (PSSS…HPSA). A compositionally biased stretch (gly residues) spans 1081-1090 (GAGGGSGPQG). Over residues 1099–1108 (PPAPHMPHPS) the composition is skewed to pro residues. The span at 1131 to 1155 (GPNTLYMQSHQDSPFTAMSPANNNW) shows a compositional bias: polar residues. A compositionally biased stretch (pro residues) spans 1159-1169 (PSMPRPSPRPG). Residues 1177–1193 (TGGGAGVAGGTDRGGSR) are compositionally biased toward gly residues. Residues 1515–1534 (GSSPNPMMPMQQLPQQVGPQ) show a composition bias toward low complexity.

It belongs to the Mediator complex subunit 14 family. As to quaternary structure, component of the Mediator complex, which may include CDK8, MED4, MED6, MED11, MED14, MED17, MED18, MED20, MED21, MED22, MED27, MED28, MED30 and MED31.

It localises to the nucleus. Functionally, component of the Mediator complex, a coactivator involved in the regulated transcription of nearly all RNA polymerase II-dependent genes. Mediator functions as a bridge to convey information from gene-specific regulatory proteins to the basal RNA polymerase II transcription machinery. Mediator is recruited to promoters by direct interactions with regulatory proteins and serves as a scaffold for the assembly of a functional pre-initiation complex with RNA polymerase II and the general transcription factors. Required for activated transcription of the MtnA, MtnB and MtnD genes. This Drosophila melanogaster (Fruit fly) protein is Mediator of RNA polymerase II transcription subunit 14 (MED14).